A 1488-amino-acid chain; its full sequence is Chromosome partition protein MukB (1488 aa).

34–41 contacts ATP; the sequence is GGNGAGKS. Coiled-coil stretches lie at residues 326 to 418, 444 to 472, and 509 to 602; these read LEAD…QYNQ, LDTF…QTAH, and RHLA…QRAP. The tract at residues 666-783 is flexible hinge; it reads PGGAEDQRLN…SLPIFGRAAR (118 aa). Coiled-coil stretches lie at residues 835–923, 977–1116, and 1209–1265; these read EAEI…AKLE, EMLS…AKAG, and VEAI…LQSV. Residues 1049–1074 form a disordered region; the sequence is ADSGAEERARQRRDELHAQLSNNRSR. Residues 1051–1065 show a composition bias toward basic and acidic residues; it reads SGAEERARQRRDELH.

The protein belongs to the SMC family. MukB subfamily. As to quaternary structure, homodimerization via its hinge domain. Binds to DNA via its C-terminal region. Interacts, and probably forms a ternary complex, with MukE and MukF via its C-terminal region. The complex formation is stimulated by calcium or magnesium. Interacts with tubulin-related protein FtsZ.

It localises to the cytoplasm. It is found in the nucleoid. In terms of biological role, plays a central role in chromosome condensation, segregation and cell cycle progression. Functions as a homodimer, which is essential for chromosome partition. Involved in negative DNA supercoiling in vivo, and by this means organize and compact chromosomes. May achieve or facilitate chromosome segregation by condensation DNA from both sides of a centrally located replisome during cell division. In Salmonella enteritidis PT4 (strain P125109), this protein is Chromosome partition protein MukB.